A 554-amino-acid polypeptide reads, in one-letter code: 2-succinyl-5-enolpyruvyl-6-hydroxy-3-cyclohexene-1-carboxylate synthase (554 aa).

This sequence belongs to the TPP enzyme family. MenD subfamily. As to quaternary structure, homodimer. It depends on Mg(2+) as a cofactor. Requires Mn(2+) as cofactor. Thiamine diphosphate is required as a cofactor.

It carries out the reaction isochorismate + 2-oxoglutarate + H(+) = 5-enolpyruvoyl-6-hydroxy-2-succinyl-cyclohex-3-ene-1-carboxylate + CO2. It participates in quinol/quinone metabolism; 1,4-dihydroxy-2-naphthoate biosynthesis; 1,4-dihydroxy-2-naphthoate from chorismate: step 2/7. It functions in the pathway quinol/quinone metabolism; menaquinone biosynthesis. Functionally, catalyzes the thiamine diphosphate-dependent decarboxylation of 2-oxoglutarate and the subsequent addition of the resulting succinic semialdehyde-thiamine pyrophosphate anion to isochorismate to yield 2-succinyl-5-enolpyruvyl-6-hydroxy-3-cyclohexene-1-carboxylate (SEPHCHC). The chain is 2-succinyl-5-enolpyruvyl-6-hydroxy-3-cyclohexene-1-carboxylate synthase from Mycobacterium tuberculosis (strain ATCC 25177 / H37Ra).